Here is a 289-residue protein sequence, read N- to C-terminus: MSTTFQLDTSTSRANPTPAPMKRLTIPAIRQRKKDGVTAQPVVMLTAYTARQAQLLDAHCDLLLVGDSLGQVIYGLPSSVPVTLDMMAAHGAAVVRGSYHAAVVVDMPFGSYEASPQQAFESASRLLKETGCAAVKLEGGEAMAETVAFLTNRGIPVMGHVGLTPQAVNVLGGYNARGRSEAEAAKIVGDARSLADAGAFAIVIEGVVEPIAIAITQAVACPTIGIGASAQCDGQVLVTEDMLGMFERVPRFVKIYEDLAGTISGAAARYADEVRARTFPGIEQTYQPK.

Over residues 1–15 (MSTTFQLDTSTSRAN) the composition is skewed to polar residues. Positions 1 to 20 (MSTTFQLDTSTSRANPTPAP) are disordered. Residues Asp67 and Asp106 each coordinate Mg(2+). 3-methyl-2-oxobutanoate contacts are provided by residues 67-68 (DS), Asp106, and Lys136. Glu138 is a Mg(2+) binding site. Glu205 functions as the Proton acceptor in the catalytic mechanism.

Belongs to the PanB family. In terms of assembly, homodecamer; pentamer of dimers. Mg(2+) is required as a cofactor.

Its subcellular location is the cytoplasm. The enzyme catalyses 3-methyl-2-oxobutanoate + (6R)-5,10-methylene-5,6,7,8-tetrahydrofolate + H2O = 2-dehydropantoate + (6S)-5,6,7,8-tetrahydrofolate. The protein operates within cofactor biosynthesis; (R)-pantothenate biosynthesis; (R)-pantoate from 3-methyl-2-oxobutanoate: step 1/2. Functionally, catalyzes the reversible reaction in which hydroxymethyl group from 5,10-methylenetetrahydrofolate is transferred onto alpha-ketoisovalerate to form ketopantoate. The sequence is that of 3-methyl-2-oxobutanoate hydroxymethyltransferase from Novosphingobium aromaticivorans (strain ATCC 700278 / DSM 12444 / CCUG 56034 / CIP 105152 / NBRC 16084 / F199).